The primary structure comprises 300 residues: MKSYMTQRLDEYRDGNEDKGRLLVSCPDQPGIVSAVSAFLFEHGANIIESNQYTTDPEGGRFFLRIEFDCAGIREKKSSLQAAFASVAEKFDMTWSLTLASELKRVAIFVSKELHCLHELIWEWQTGNLMAEIAVVISNHEEARELVERLNIPFHYMKANKDIRAEVEKKQLELLEQYDVDVIVLARYMQILTPDFVSAHPNRIINIHHSFLPAFIGANPYKRAYERGVKLIGATSHYVTNDLDEGPIIEQDIERVDHRDNAEALKNIGRTIERSVLARAVKWHLEDRVIVHENKTIVFN.

The 82-residue stretch at 21 to 102 (RLLVSCPDQP…MTWSLTLASE (82 aa)) folds into the ACT domain. Asp244 is a catalytic residue.

The protein belongs to the PurU family.

The enzyme catalyses (6R)-10-formyltetrahydrofolate + H2O = (6S)-5,6,7,8-tetrahydrofolate + formate + H(+). Its pathway is purine metabolism; IMP biosynthesis via de novo pathway; formate from 10-formyl-5,6,7,8-tetrahydrofolate: step 1/1. Catalyzes the hydrolysis of 10-formyltetrahydrofolate (formyl-FH4) to formate and tetrahydrofolate (FH4). The sequence is that of Formyltetrahydrofolate deformylase from Bacillus subtilis (strain 168).